Reading from the N-terminus, the 338-residue chain is POU domain, class 4, transcription factor 3 (338 aa).

Residues 56-65 carry the POU-IV box motif; the sequence is RAEALAAVDI. The tract at residues 91-112 is disordered; that stretch reads TSPTVPISHPAALTSHPHHPVH. The POU-specific domain maps to 179 to 256; it reads DVESDPRELE…VLQAWLEEAE (78 aa). The homeobox DNA-binding region spans 274–333; it reads RKRKRTSIAAPEKRSLEAYFAIQPRPSSEKIAAIAEKLDLKKNVVRVWFCNQRQKQKRMK.

It belongs to the POU transcription factor family. In terms of assembly, interacts with ISL1. In terms of tissue distribution, expressed in the chochlea of the inner ear.

It is found in the nucleus. The protein localises to the cytoplasm. Functionally, acts as a transcriptional activator. Acts by binding to sequences related to the consensus octamer motif 5'-ATGCAAAT-3' in the regulatory regions of its target genes. Involved in the auditory system development, required for terminal differentiation of hair cells in the inner ear. The chain is POU domain, class 4, transcription factor 3 from Rattus norvegicus (Rat).